The chain runs to 522 residues: 5,6-dihydroxyindole-2-carboxylic acid oxidase (522 aa).

The N-terminal stretch at 1–21 (MLRTSCGGMLLLVHALGLVRA) is a signal peptide. Residues 22–470 (QFPRACVTPE…RPLTPTQIVT (449 aa)) are Lumenal, melanosome-facing. 5 disulfide bridges follow: C27/C38, C39/C59, C50/C89, C91/C100, and C103/C112. N-linked (GlcNAc...) asparagine glycosylation is found at N164 and N171. The Zn(2+) site is built by H182, H205, and H214. 2 disulfides stabilise this stretch: C248-C251 and C280-C293. A glycan (N-linked (GlcNAc...) asparagine) is linked at N294. Zn(2+)-binding residues include H367 and H371. A glycan (N-linked (GlcNAc...) asparagine) is linked at N375. Residue H394 coordinates Zn(2+). The chain crosses the membrane as a helical span at residues 471–491 (VAVVAALLLVAIIFAASTCVV). Residues 492–522 (HLRGNRTEGRQPLLGDQYQRYEDHNKTQSVV) are Cytoplasmic-facing.

It belongs to the tyrosinase family. Cu(2+) is required as a cofactor. Zn(2+) serves as cofactor.

Its subcellular location is the melanosome membrane. The catalysed reaction is 2 5,6-dihydroxyindole-2-carboxylate + O2 = 2 indole-5,6-quinone-2-carboxylate + 2 H2O. It functions in the pathway pigment biosynthesis; melanin biosynthesis. Its function is as follows. Plays a role in melanin biosynthesis. Catalyzes the oxidation of 5,6-dihydroxyindole-2-carboxylic acid (DHICA) into indole-5,6-quinone-2-carboxylic acid. May regulate or influence the type of melanin synthesized. Also to a lower extent, capable of hydroxylating tyrosine and producing melanin. The polypeptide is 5,6-dihydroxyindole-2-carboxylic acid oxidase (tyrp1) (Carassius auratus (Goldfish)).